The chain runs to 320 residues: ATP-dependent 6-phosphofructokinase (320 aa).

An ATP-binding site is contributed by glycine 12. Residues 22–26 (RGVVR) and 55–60 (RYSVSD) each bind ADP. ATP-binding positions include 73 to 74 (RF) and 103 to 106 (GDGS). Aspartate 104 serves as a coordination point for Mg(2+). 126–128 (TID) contributes to the substrate binding site. The Proton acceptor role is filled by aspartate 128. Arginine 155 serves as a coordination point for ADP. Residues arginine 163 and 170-172 (MGR) each bind substrate. ADP is bound by residues 186–188 (GCE), lysine 212, and 214–216 (KKH). Substrate-binding positions include glutamate 223, arginine 244, and 250–253 (HIQR).

This sequence belongs to the phosphofructokinase type A (PFKA) family. ATP-dependent PFK group I subfamily. Prokaryotic clade 'B1' sub-subfamily. Homotetramer. Requires Mg(2+) as cofactor.

The protein localises to the cytoplasm. The catalysed reaction is beta-D-fructose 6-phosphate + ATP = beta-D-fructose 1,6-bisphosphate + ADP + H(+). Its pathway is carbohydrate degradation; glycolysis; D-glyceraldehyde 3-phosphate and glycerone phosphate from D-glucose: step 3/4. Its activity is regulated as follows. Allosterically activated by ADP and other diphosphonucleosides, and allosterically inhibited by phosphoenolpyruvate. In terms of biological role, catalyzes the phosphorylation of D-fructose 6-phosphate to fructose 1,6-bisphosphate by ATP, the first committing step of glycolysis. The sequence is that of ATP-dependent 6-phosphofructokinase from Serratia proteamaculans (strain 568).